Reading from the N-terminus, the 874-residue chain is Alanine--tRNA ligase (874 aa).

Zn(2+) is bound by residues H562, H566, C664, and H668.

Belongs to the class-II aminoacyl-tRNA synthetase family. The cofactor is Zn(2+).

It is found in the cytoplasm. The catalysed reaction is tRNA(Ala) + L-alanine + ATP = L-alanyl-tRNA(Ala) + AMP + diphosphate. Functionally, catalyzes the attachment of alanine to tRNA(Ala) in a two-step reaction: alanine is first activated by ATP to form Ala-AMP and then transferred to the acceptor end of tRNA(Ala). Also edits incorrectly charged Ser-tRNA(Ala) and Gly-tRNA(Ala) via its editing domain. The polypeptide is Alanine--tRNA ligase (Shewanella baltica (strain OS155 / ATCC BAA-1091)).